We begin with the raw amino-acid sequence, 699 residues long: Kinesin-II 85 kDa subunit (699 aa).

Residues 10 to 342 (NVRVVVRCRP…LRYANRAKNI (333 aa)) enclose the Kinesin motor domain. 97-104 (GQTGTGKT) serves as a coordination point for ATP. A coiled-coil region spans residues 341–619 (NIKNKAKINE…EDIGEWQLKC (279 aa)). Disordered stretches follow at residues 369 to 415 (KQIS…LSPE), 432 to 456 (EEKK…ESEL), and 660 to 699 (GMKY…ALLQ). Positions 376–395 (EGLDDDEESGSEESGDEEAG) are enriched in acidic residues. Over residues 400-411 (KKKRKGKNPKRK) the composition is skewed to basic residues. The tract at residues 620 to 699 (VAYTGNNMRK…MASSIDALLQ (80 aa)) is globular. Residues 667–679 (QGKSGRPKTSSGR) show a composition bias toward polar residues.

It belongs to the TRAFAC class myosin-kinesin ATPase superfamily. Kinesin family. Kinesin II subfamily. In terms of assembly, heterotrimer of a 115 kDa subunit (KAP115) and two kinesin-like subunits of 95 kDa (KRP95) and 85 kDa (KRP85). Post-translationally, the N-terminus is blocked.

The protein localises to the cytoplasm. It is found in the cytoskeleton. This chain is Kinesin-II 85 kDa subunit (KRP85), found in Strongylocentrotus purpuratus (Purple sea urchin).